The sequence spans 156 residues: ATP synthase subunit b (156 aa).

Residues 12 to 32 (VAFFIFVLFCMKFVWPPVIAA) traverse the membrane as a helical segment.

This sequence belongs to the ATPase B chain family. In terms of assembly, F-type ATPases have 2 components, F(1) - the catalytic core - and F(0) - the membrane proton channel. F(1) has five subunits: alpha(3), beta(3), gamma(1), delta(1), epsilon(1). F(0) has three main subunits: a(1), b(2) and c(10-14). The alpha and beta chains form an alternating ring which encloses part of the gamma chain. F(1) is attached to F(0) by a central stalk formed by the gamma and epsilon chains, while a peripheral stalk is formed by the delta and b chains.

It localises to the cell inner membrane. In terms of biological role, f(1)F(0) ATP synthase produces ATP from ADP in the presence of a proton or sodium gradient. F-type ATPases consist of two structural domains, F(1) containing the extramembraneous catalytic core and F(0) containing the membrane proton channel, linked together by a central stalk and a peripheral stalk. During catalysis, ATP synthesis in the catalytic domain of F(1) is coupled via a rotary mechanism of the central stalk subunits to proton translocation. Functionally, component of the F(0) channel, it forms part of the peripheral stalk, linking F(1) to F(0). The sequence is that of ATP synthase subunit b from Pseudomonas paraeruginosa (strain DSM 24068 / PA7) (Pseudomonas aeruginosa (strain PA7)).